A 404-amino-acid polypeptide reads, in one-letter code: uncharacterized protein (404 aa).

Helical transmembrane passes span 35-55 (ILFS…FTFL) and 92-112 (EDIW…ISSI).

The protein localises to the membrane. This is an uncharacterized protein from Saccharomyces cerevisiae (strain ATCC 204508 / S288c) (Baker's yeast).